We begin with the raw amino-acid sequence, 679 residues long: Glycine--tRNA ligase beta subunit (679 aa).

It belongs to the class-II aminoacyl-tRNA synthetase family. In terms of assembly, tetramer of two alpha and two beta subunits.

Its subcellular location is the cytoplasm. It catalyses the reaction tRNA(Gly) + glycine + ATP = glycyl-tRNA(Gly) + AMP + diphosphate. This is Glycine--tRNA ligase beta subunit from Streptococcus uberis (strain ATCC BAA-854 / 0140J).